Consider the following 568-residue polypeptide: Fumarate hydratase 2 (568 aa).

Cys133 lines the [4Fe-4S] cluster pocket. (S)-malate is bound by residues 134–135 (QD), Arg173, Gly216, and 219–225 (NKAYLYQ). [4Fe-4S] cluster contacts are provided by Cys252 and Cys346. Residues Arg421, 467-471 (TTAGR), and Lys491 contribute to the (S)-malate site.

This sequence belongs to the class-I fumarase family. Homodimer. The cofactor is [4Fe-4S] cluster.

It localises to the cytoplasm. It is found in the cytosol. The enzyme catalyses (S)-malate = fumarate + H2O. Specifically and competitively inhibited by 2-thiomalate, which coordinates with the catalytic [4Fe-4S] cluster. Weakly inhibited by malonate. Cytosolic fumarate hydratase that catalyzes the reversible hydration of fumarate to (S)-malate. In Leishmania major, this protein is Fumarate hydratase 2.